The sequence spans 379 residues: 3-dehydroquinate synthase (379 aa).

NAD(+) contacts are provided by residues 67-72 (PGEKNK), 101-105 (GIVLD), 125-126 (TT), lysine 138, and lysine 147. Glutamate 180, histidine 242, and histidine 258 together coordinate Zn(2+).

Belongs to the sugar phosphate cyclases superfamily. Dehydroquinate synthase family. The cofactor is NAD(+). Requires Co(2+) as cofactor. It depends on Zn(2+) as a cofactor.

The protein resides in the cytoplasm. The enzyme catalyses 7-phospho-2-dehydro-3-deoxy-D-arabino-heptonate = 3-dehydroquinate + phosphate. It participates in metabolic intermediate biosynthesis; chorismate biosynthesis; chorismate from D-erythrose 4-phosphate and phosphoenolpyruvate: step 2/7. Its function is as follows. Catalyzes the conversion of 3-deoxy-D-arabino-heptulosonate 7-phosphate (DAHP) to dehydroquinate (DHQ). The polypeptide is 3-dehydroquinate synthase (Chlamydia felis (strain Fe/C-56) (Chlamydophila felis)).